Reading from the N-terminus, the 779-residue chain is MVSLSFILCCVLVSSCAYATIVSHDGRAITIDGHRRVLLSGSIHYPRSTTEMWPDLIKKGKEGSLDAIETYVFWNAHEPTRRQYDFSGNLDLIRFLKTIQNEGMYGVLRIGPYVCAEWNYGGFPVWLHNMPGMEFRTTNTAFMNEMQNFTTMIVEMVKKEKLFASQGGPIILAQIENEYGNVIGSYGEAGKAYIQWCANMANSLDVGVPWIMCQQDDAPQPMLNTCNGYYCDNFSPNNPNTPKMWTENWTGWYKNWGGKDPHRTTEDVAFAVARFFQKEGTFQNYYMYHGGTNFDRTAGGPYITTTYDYDAPLDEFGNLNQPKYGHLKQLHDVLHAMEKTLTYGNISTVDFGNLVTATVYQTEEGSSCFIGNVNETSDAKINFQGTSYDVPAWSVSILPDCKTETYNTAKINTQTSVMVKKANEAENEPSTLKWSWRPENIDSVLLKGKGESTMRQLFDQKVVSNDESDYLWYMTTVNLKEQDPVLGKNMSLRINSTAHVLHAFVNGQHIGNYRVENGKFHYVFEQDAKFNPGANVITLLSITVGLPNYGAFFENFSAGITGPVFIIGRNGDETIVKDLSTHKWSYKTGLSGFENQLFSSESPSTWSAPLGSEPVVVDLLGLGKGTAWINGNNIGRYWPAFLSDIDGCSAEYHVPRSFLNSEGDNTLVLFEEIGGNPSLVNFQTIGVGSVCANVYEKNVLELSCNGKPISAIKFASFGNPGGDCGSFEKGTCEASNNAAAILTQECVGKEKCSIDVSEDKFGAAECGALAKRLAVEAIC.

Positions 1–19 (MVSLSFILCCVLVSSCAYA) are cleaved as a signal peptide. An N-linked (GlcNAc...) asparagine glycan is attached at N148. E178 (proton donor) is an active-site residue. The active-site Nucleophile is the E247. N-linked (GlcNAc...) asparagine glycans are attached at residues N248, N345, N374, N489, N495, and N555. The 86-residue stretch at 694–779 (VYEKNVLELS…AKRLAVEAIC (86 aa)) folds into the SUEL-type lectin domain.

It belongs to the glycosyl hydrolase 35 family. Ubiquitous, with higher levels in roots and siliques.

The protein resides in the secreted. Its subcellular location is the extracellular space. The protein localises to the apoplast. It carries out the reaction Hydrolysis of terminal non-reducing beta-D-galactose residues in beta-D-galactosides.. The protein is Beta-galactosidase 15 (BGAL15) of Arabidopsis thaliana (Mouse-ear cress).